We begin with the raw amino-acid sequence, 362 residues long: Innexin inx1 (362 aa).

Residues 1 to 28 lie on the Cytoplasmic side of the membrane; sequence MYKLLGSLKSYLKWQDIQTDNAVFRLHN. A helical transmembrane segment spans residues 29-49; the sequence is SFTTVLLLTCSLIITATQYVG. Over 50–110 the chain is Extracellular; the sequence is QPISCIVNGV…DAKKYYTYYQ (61 aa). A helical membrane pass occupies residues 111-131; the sequence is WVCFVLFFQAMACYTPKFLWN. Residues 132–177 are Cytoplasmic-facing; sequence KFEGGLMRMIVMGLNITICTREEKEAKRDALLDYLIKHVKRHKLYA. A helical transmembrane segment spans residues 178–198; the sequence is IRYWACEFLCCINIIVQMYLM. Residues 199 to 267 are Extracellular-facing; the sequence is NRFFDGEFLS…LPLNIVNEKT (69 aa). The helical transmembrane segment at 268–288 threads the bilayer; it reads YVFIWFWFWILLVLLIGLIVF. Residues 289-362 are Cytoplasmic-facing; that stretch reads RGCIIFMPKF…VEPSKHDRAK (74 aa).

It belongs to the pannexin family. Heterooligomer of Inx2 and ogre. In ovary, expressed in follicle cells. Expressed around the periphery of the embryo during cellular blastoderm formation. Repeating epidermal pattern emerges from stage 11, high levels of expression detected along the borders of each segment from stage 13. At stage 13, expressed in the dorsal branch of the tracheal system. During stage 15, detected in a few cells at each of the branch points of the dorsal trunk and at low levels in cardioblasts. In embryos, also expressed in the salivary gland and the hindgut (at protein level). At stage 17, expressed in the dorsal side of the CNS. Expressed in the imaginal wing disk. Expressed in larval CNS and in tissues outside of the CNS. In pupae, expressed in the CNS and in primary, secondary and tertiary pigment cells of the retina.

It is found in the cell membrane. Its subcellular location is the cell junction. The protein resides in the gap junction. The protein localises to the basolateral cell membrane. Structural component of the gap junctions. Essential for generation and/or maintenance of postembryonic neuroblasts and normal development of optic lobe. In Drosophila melanogaster (Fruit fly), this protein is Innexin inx1 (ogre).